Consider the following 136-residue polypeptide: Large ribosomal subunit protein uL16 (136 aa).

It belongs to the universal ribosomal protein uL16 family. Part of the 50S ribosomal subunit.

Functionally, binds 23S rRNA and is also seen to make contacts with the A and possibly P site tRNAs. The sequence is that of Large ribosomal subunit protein uL16 from Salmonella agona (strain SL483).